Here is a 93-residue protein sequence, read N- to C-terminus: Small ribosomal subunit protein uS19 (93 aa).

The protein belongs to the universal ribosomal protein uS19 family.

Functionally, protein S19 forms a complex with S13 that binds strongly to the 16S ribosomal RNA. The chain is Small ribosomal subunit protein uS19 from Synechococcus sp. (strain JA-2-3B'a(2-13)) (Cyanobacteria bacterium Yellowstone B-Prime).